The sequence spans 219 residues: uncharacterized protein (219 aa).

Ser23 bears the Phosphoserine mark. Lys137 participates in a covalent cross-link: Glycyl lysine isopeptide (Lys-Gly) (interchain with G-Cter in SUMO).

The protein resides in the cytoplasm. This is an uncharacterized protein from Saccharomyces cerevisiae (strain ATCC 204508 / S288c) (Baker's yeast).